The primary structure comprises 812 residues: 1,4-alpha-glucan branching enzyme GlgB (812 aa).

The span at 1 to 11 (MNNGDVNNGTA) shows a compositional bias: polar residues. The tract at residues 1-83 (MNNGDVNNGT…SALPADPPAV (83 aa)) is disordered. The span at 49-64 (SSASAQPGQTADDPAV) shows a compositional bias: low complexity. Over residues 65–83 (PSAPPSAPPSALPADPPAV) the composition is skewed to pro residues. Catalysis depends on Asp490, which acts as the Nucleophile. Glu543 acts as the Proton donor in catalysis.

The protein belongs to the glycosyl hydrolase 13 family. GlgB subfamily. As to quaternary structure, monomer.

The enzyme catalyses Transfers a segment of a (1-&gt;4)-alpha-D-glucan chain to a primary hydroxy group in a similar glucan chain.. Its pathway is glycan biosynthesis; glycogen biosynthesis. Functionally, catalyzes the formation of the alpha-1,6-glucosidic linkages in glycogen by scission of a 1,4-alpha-linked oligosaccharide from growing alpha-1,4-glucan chains and the subsequent attachment of the oligosaccharide to the alpha-1,6 position. The polypeptide is 1,4-alpha-glucan branching enzyme GlgB (Frankia casuarinae (strain DSM 45818 / CECT 9043 / HFP020203 / CcI3)).